The following is a 1095-amino-acid chain: Formin-like protein 2 (1095 aa).

Positions 23-469 (LPMPEPGELE…EAIQRQSTLE (447 aa)) constitute a GBD/FH3 domain. The stretch at 381–478 (LLEDAETKNA…EKKIHELEKQ (98 aa)) forms a coiled coil. Residues 521 to 602 (PSSGPLPPPP…PSAPPLPGTS (82 aa)) are disordered. Pro residues-rich tracts occupy residues 524 to 534 (GPLPPPPPPLP), 548 to 576 (ATPP…PLPG), and 583 to 599 (PAPP…PPLP). In terms of domain architecture, FH2 spans 617–1008 (IKKPIKTKFR…LMEKLLEQEA (392 aa)).

The protein belongs to the formin homology family. As to quaternary structure, interacts with TCP11L2; this interaction promotes muscle-derived satellite cell (MDSC) migration and differentiation.

It is found in the cytoplasm. Its function is as follows. Plays a role in the regulation of cell morphology and cytoskeletal organization. Required in the cortical actin filament dynamics. The sequence is that of Formin-like protein 2 from Bos taurus (Bovine).